Reading from the N-terminus, the 206-residue chain is Probable glutathione S-transferase 9 (206 aa).

Residues 2-79 enclose the GST N-terminal domain; it reads VSYKLIYFQS…YLSKQFGISG (78 aa). Glutathione-binding positions include Tyr-8, Trp-39, Lys-43, 49–51, and 63–64; these read GQV and QS. The region spanning 81 to 206 is the GST C-terminal domain; that stretch reads SSWEEAQVDA…WIEKRPVTSR (126 aa).

The protein belongs to the GST superfamily. Sigma family.

It carries out the reaction RX + glutathione = an S-substituted glutathione + a halide anion + H(+). Conjugation of reduced glutathione to a wide number of exogenous and endogenous hydrophobic electrophiles. The polypeptide is Probable glutathione S-transferase 9 (gst-9) (Caenorhabditis elegans).